A 259-amino-acid chain; its full sequence is 1,2-dihydroxy-1,2-dihydronaphthalene dehydrogenase (259 aa).

8 to 32 (SITGAGSGIGLELVRSFKSAGYYVS) lines the NAD(+) pocket. Ser-140 is a binding site for substrate. Residue Tyr-153 is the Proton acceptor of the active site.

It belongs to the short-chain dehydrogenases/reductases (SDR) family.

The catalysed reaction is (1R,2S)-1,2-dihydronaphthalene-1,2-diol + NAD(+) = naphthalene-1,2-diol + NADH + H(+). It carries out the reaction cis-1,2-dihydroxy-1,2-dihydrodibenzothiophene + NAD(+) = 1,2-dihydroxydibenzothiophene + NADH + H(+). Its pathway is aromatic compound metabolism; naphthalene degradation. In terms of biological role, catalyzes the oxidation of naphthalene dihydrodiol into 1,2-dihydroxynaphthalene. The chain is 1,2-dihydroxy-1,2-dihydronaphthalene dehydrogenase (doxE) from Pseudomonas sp. (strain C18).